The following is a 291-amino-acid chain: Ribonuclease Z (291 aa).

Zn(2+)-binding residues include His-61, His-63, Asp-65, His-66, His-133, Asp-201, and His-257. Asp-65 functions as the Proton acceptor in the catalytic mechanism.

The protein belongs to the RNase Z family. Homodimer. Zn(2+) serves as cofactor.

The enzyme catalyses Endonucleolytic cleavage of RNA, removing extra 3' nucleotides from tRNA precursor, generating 3' termini of tRNAs. A 3'-hydroxy group is left at the tRNA terminus and a 5'-phosphoryl group is left at the trailer molecule.. Zinc phosphodiesterase, which displays some tRNA 3'-processing endonuclease activity. Probably involved in tRNA maturation, by removing a 3'-trailer from precursor tRNA. This Saccharolobus solfataricus (strain ATCC 35092 / DSM 1617 / JCM 11322 / P2) (Sulfolobus solfataricus) protein is Ribonuclease Z.